The primary structure comprises 290 residues: Nucleotide-binding protein XF_1405 (290 aa).

13–20 (GLSGSGKS) contacts ATP. 65–68 (DIRS) is a GTP binding site.

The protein belongs to the RapZ-like family.

In terms of biological role, displays ATPase and GTPase activities. The sequence is that of Nucleotide-binding protein XF_1405 from Xylella fastidiosa (strain 9a5c).